A 106-amino-acid polypeptide reads, in one-letter code: UPF0060 membrane protein CHU_3331 (106 aa).

Transmembrane regions (helical) follow at residues 5 to 25, 31 to 51, 59 to 79, and 85 to 105; these read FYFILAAFCEISGCYLFWLHF, ALLLLPAAACLLVFAYLLTKI, AYAVYGGIYIVCSLAWMYGIE, and IWDYIGVGICLIGASVILFAP.

It belongs to the UPF0060 family.

It is found in the cell inner membrane. The protein is UPF0060 membrane protein CHU_3331 of Cytophaga hutchinsonii (strain ATCC 33406 / DSM 1761 / CIP 103989 / NBRC 15051 / NCIMB 9469 / D465).